Reading from the N-terminus, the 313-residue chain is Ribose-phosphate pyrophosphokinase (313 aa).

ATP-binding positions include 37–39 (DGE) and 96–97 (RQ). Mg(2+) is bound by residues H131 and D170. Residue K193 is part of the active site. D-ribose 5-phosphate contacts are provided by residues R195, D219, and 223–227 (DTAGT).

This sequence belongs to the ribose-phosphate pyrophosphokinase family. Class I subfamily. As to quaternary structure, homohexamer. It depends on Mg(2+) as a cofactor.

The protein resides in the cytoplasm. It catalyses the reaction D-ribose 5-phosphate + ATP = 5-phospho-alpha-D-ribose 1-diphosphate + AMP + H(+). It participates in metabolic intermediate biosynthesis; 5-phospho-alpha-D-ribose 1-diphosphate biosynthesis; 5-phospho-alpha-D-ribose 1-diphosphate from D-ribose 5-phosphate (route I): step 1/1. In terms of biological role, involved in the biosynthesis of the central metabolite phospho-alpha-D-ribosyl-1-pyrophosphate (PRPP) via the transfer of pyrophosphoryl group from ATP to 1-hydroxyl of ribose-5-phosphate (Rib-5-P). This is Ribose-phosphate pyrophosphokinase from Pseudomonas syringae pv. tomato (strain ATCC BAA-871 / DC3000).